A 173-amino-acid polypeptide reads, in one-letter code: MKVILRSDVENLGRLGDIVTVKSGYGRNYLLPQGLAMLVTPGNMKVFELEFKKLQERMNDIRSKADELAKRISGLIVTVLMRAGDNDKLYGSVTTSIIGHALAEQGIDIDRRRILLDAPIRTLGQHTVRVRLHADVIAEFIVNVASEEKLYDDTPDRTETEESTKELQEEHAE.

The segment at 151-173 (YDDTPDRTETEESTKELQEEHAE) is disordered.

This sequence belongs to the bacterial ribosomal protein bL9 family.

Functionally, binds to the 23S rRNA. This is Large ribosomal subunit protein bL9 from Lawsonia intracellularis (strain PHE/MN1-00).